A 136-amino-acid polypeptide reads, in one-letter code: Small ribosomal subunit protein uS11c (136 aa).

Residues 1-22 (MAKAIPKKGSRGRIGSRKSTRK) form a disordered region.

It belongs to the universal ribosomal protein uS11 family. Part of the 30S ribosomal subunit.

Its subcellular location is the plastid. It localises to the chloroplast. The protein is Small ribosomal subunit protein uS11c of Lactuca sativa (Garden lettuce).